The following is a 311-amino-acid chain: tRNA(Ile)-lysidine synthase (311 aa).

31-36 (SGGKDS) lines the ATP pocket.

The protein belongs to the tRNA(Ile)-lysidine synthase family.

The protein localises to the cytoplasm. The catalysed reaction is cytidine(34) in tRNA(Ile2) + L-lysine + ATP = lysidine(34) in tRNA(Ile2) + AMP + diphosphate + H(+). Ligates lysine onto the cytidine present at position 34 of the AUA codon-specific tRNA(Ile) that contains the anticodon CAU, in an ATP-dependent manner. Cytidine is converted to lysidine, thus changing the amino acid specificity of the tRNA from methionine to isoleucine. In Petrotoga mobilis (strain DSM 10674 / SJ95), this protein is tRNA(Ile)-lysidine synthase.